We begin with the raw amino-acid sequence, 500 residues long: Trehalose-6-phosphate synthase (500 aa).

Residue R28 coordinates D-glucose 6-phosphate. 48-49 (GG) lines the UDP-alpha-D-glucose pocket. D-glucose 6-phosphate contacts are provided by Y108 and D162. UDP-alpha-D-glucose contacts are provided by R304 and K309. R342 is a binding site for D-glucose 6-phosphate. 407–411 (LVAKE) is a binding site for UDP-alpha-D-glucose.

Belongs to the glycosyltransferase 20 family. In terms of assembly, homotetramer.

It catalyses the reaction ADP-alpha-D-glucose + D-glucose 6-phosphate = alpha,alpha-trehalose 6-phosphate + ADP + H(+). The catalysed reaction is CDP-alpha-D-glucose + D-glucose 6-phosphate = alpha,alpha-trehalose 6-phosphate + CDP + H(+). It carries out the reaction GDP-alpha-D-glucose + D-glucose 6-phosphate = alpha,alpha-trehalose 6-phosphate + GDP + H(+). The enzyme catalyses TDP-alpha-D-glucose + D-glucose 6-phosphate = 5-methyl-UDP + alpha,alpha-trehalose 6-phosphate + H(+). It catalyses the reaction D-glucose 6-phosphate + UDP-alpha-D-glucose = alpha,alpha-trehalose 6-phosphate + UDP + H(+). It functions in the pathway glycan biosynthesis; trehalose biosynthesis. In terms of biological role, probably involved in the osmoprotection via the biosynthesis of trehalose and in the production of glycogen and alpha-glucan via the TreS-Pep2 branch involved in the biosynthesis of maltose-1-phosphate (M1P). Catalyzes the transfer of glucose from UDP-glucose (UDP-Glc) to D-glucose 6-phosphate (Glc-6-P) to form trehalose-6-phosphate. Probably also able to use ADP-Glc, CDP-Glc, GDP-Glc and TDP-Glc as glucosyl donors. This Mycobacterium tuberculosis (strain CDC 1551 / Oshkosh) protein is Trehalose-6-phosphate synthase.